Reading from the N-terminus, the 326-residue chain is Protein BugT (326 aa).

A signal peptide spans 1–25 (MNMTRLLAVIGIFIATAGIAAPVSA).

Belongs to the UPF0065 (bug) family.

It localises to the periplasm. The polypeptide is Protein BugT (bugT) (Bordetella pertussis (strain Tohama I / ATCC BAA-589 / NCTC 13251)).